Consider the following 475-residue polypeptide: Aspartic proteinase 39 (475 aa).

An N-terminal signal peptide occupies residues 1–23 (MELRRKLCIVVAVFVIVIEFASA). The region spanning 74-422 (YFTKIKLGSP…DLDNEVIGWA (349 aa)) is the Peptidase A1 domain. Asp-92 is an active-site residue. N-linked (GlcNAc...) asparagine glycosylation is found at Asn-124 and Asn-222. Asp-303 is a catalytic residue. Residues Asn-425 and Asn-446 are each glycosylated (N-linked (GlcNAc...) asparagine). Residue Ser-449 is the site of GPI-anchor amidated serine attachment. Residues 450–475 (APRLLMITKLLTILSPLIVMAFTSLA) constitute a propeptide, removed in mature form.

Belongs to the peptidase A1 family. In terms of tissue distribution, highly expressed in pollen and pollen tubes. Mostly expressed in inflorescence, flowers and siliques, and barely in leaves and seedlings.

Its subcellular location is the cell membrane. It localises to the cytoplasm. It is found in the cytosol. Displays aspartic proteolytic activity. Together with A36, contributes to pollen and ovule development, including the apical cell wall constitution of the growing pollen tubes. This is Aspartic proteinase 39 from Arabidopsis thaliana (Mouse-ear cress).